The following is a 162-amino-acid chain: Beta-lactoglobulin-3 (162 aa).

2 cysteine pairs are disulfide-bonded: Cys66–Cys160 and Cys106–Cys119.

This sequence belongs to the calycin superfamily. Lipocalin family. Monomer.

It is found in the secreted. Functionally, lactoglobulin is the primary component of whey, it binds retinol and is probably involved in the transport of that molecule. The sequence is that of Beta-lactoglobulin-3 (LGB3) from Felis catus (Cat).